We begin with the raw amino-acid sequence, 190 residues long: Probable E3 ubiquitin-protein ligase RHB1A (190 aa).

The segment at 139–180 (CPICFEDYDVENPRLTTKCEHEFHLSCLLEWIERSDRCPICD) adopts an RING-type; atypical zinc-finger fold.

It catalyses the reaction S-ubiquitinyl-[E2 ubiquitin-conjugating enzyme]-L-cysteine + [acceptor protein]-L-lysine = [E2 ubiquitin-conjugating enzyme]-L-cysteine + N(6)-ubiquitinyl-[acceptor protein]-L-lysine.. Its pathway is protein modification; protein ubiquitination. In terms of biological role, probable E3 ubiquitin-protein ligase that may possess E3 ubiquitin ligase activity in vitro. The polypeptide is Probable E3 ubiquitin-protein ligase RHB1A (Arabidopsis thaliana (Mouse-ear cress)).